Here is a 155-residue protein sequence, read N- to C-terminus: Small ribosomal subunit protein uS7 (155 aa).

This sequence belongs to the universal ribosomal protein uS7 family. As to quaternary structure, part of the 30S ribosomal subunit. Contacts proteins S9 and S11.

In terms of biological role, one of the primary rRNA binding proteins, it binds directly to 16S rRNA where it nucleates assembly of the head domain of the 30S subunit. Is located at the subunit interface close to the decoding center, probably blocks exit of the E-site tRNA. This chain is Small ribosomal subunit protein uS7, found in Helicobacter acinonychis (strain Sheeba).